A 311-amino-acid chain; its full sequence is GTPase Era (311 aa).

The 168-residue stretch at 18-185 (RSGFVALIGA…AKYLAESVPN (168 aa)) folds into the Era-type G domain. Residues 26–33 (GAPNAGKS) are G1. 26-33 (GAPNAGKS) is a GTP binding site. A G2 region spans residues 52–56 (QTTRA). The interval 73–76 (DTPG) is G3. Residues 73–77 (DTPGI) and 135–138 (NKVD) contribute to the GTP site. Residues 135–138 (NKVD) are G4. The tract at residues 164–166 (ISA) is G5. The KH type-2 domain maps to 216–293 (LHEELPYAST…HQFLFVKVRE (78 aa)).

This sequence belongs to the TRAFAC class TrmE-Era-EngA-EngB-Septin-like GTPase superfamily. Era GTPase family. In terms of assembly, monomer.

Its subcellular location is the cytoplasm. The protein localises to the cell inner membrane. Functionally, an essential GTPase that binds both GDP and GTP, with rapid nucleotide exchange. Plays a role in 16S rRNA processing and 30S ribosomal subunit biogenesis and possibly also in cell cycle regulation and energy metabolism. This Brucella melitensis biotype 1 (strain ATCC 23456 / CCUG 17765 / NCTC 10094 / 16M) protein is GTPase Era.